The following is a 355-amino-acid chain: MSGQPKRLMVMAGGTGGHVFPGLAVAHHLMAQGWQVRWLGTADRMEADLVPKHGIDIDFIRISGLRGKGVKALLAAPLRIFNAWRQARAIMKRFKPDVVLGMGGYVSGPGGLAAWSLGIPVVLHEQNGIAGLTNQWLARIATTVMQAFPGAFPNAEVVGNPVRTDVLALPLPQVRLAGRDGPIRVLVVGGSQGARVLNQTMPQVAARLGDTVTIWHQSGKGAQLTVEQAYAGTGQPQHKVTEFIDDMAAAYAWADVVVCRSGALTVSEIAAAGLPAIFVPFQHKDRQQYWNALPLENAGAAKIFEQPQFTVEAVADTLAGWSREALLTMAERARAVSIPDATERVASEVSRVART.

Residues 15 to 17, Asn127, Arg163, Ser191, Ile244, 263 to 268, and Gln288 contribute to the UDP-N-acetyl-alpha-D-glucosamine site; these read TGG and ALTVSE.

This sequence belongs to the glycosyltransferase 28 family. MurG subfamily.

The protein resides in the cell inner membrane. It carries out the reaction di-trans,octa-cis-undecaprenyl diphospho-N-acetyl-alpha-D-muramoyl-L-alanyl-D-glutamyl-meso-2,6-diaminopimeloyl-D-alanyl-D-alanine + UDP-N-acetyl-alpha-D-glucosamine = di-trans,octa-cis-undecaprenyl diphospho-[N-acetyl-alpha-D-glucosaminyl-(1-&gt;4)]-N-acetyl-alpha-D-muramoyl-L-alanyl-D-glutamyl-meso-2,6-diaminopimeloyl-D-alanyl-D-alanine + UDP + H(+). Its pathway is cell wall biogenesis; peptidoglycan biosynthesis. Cell wall formation. Catalyzes the transfer of a GlcNAc subunit on undecaprenyl-pyrophosphoryl-MurNAc-pentapeptide (lipid intermediate I) to form undecaprenyl-pyrophosphoryl-MurNAc-(pentapeptide)GlcNAc (lipid intermediate II). This is UDP-N-acetylglucosamine--N-acetylmuramyl-(pentapeptide) pyrophosphoryl-undecaprenol N-acetylglucosamine transferase from Salmonella paratyphi A (strain ATCC 9150 / SARB42).